Reading from the N-terminus, the 304-residue chain is MSWIERILNKSNITQTRKASIPEGVWTKCDSCGQVLYRAELERNLEVCPKCDHHMRMSARARLHMLLDAGSEVELGSELEPKDILKFRDSKKYKDRISAAQKDTGEKDALVAMKGTLQGMPIVAASFEFAFMGGSMASVVGARFVRAVEQALEDNCPLVCFSSSGGARMQEALMSLMQMAKTSAALAKMQERGLPYISVLTDPTMGGVSASLAMLGDINIAEPKALIGFAGPRVIEQTVREKLPPGFQRSEFLIEKGAIDMIVRRPVMRQTLASILSKLTHQPQPSVVESKADTVAQPENQADV.

Positions 25-294 (VWTKCDSCGQ…PSVVESKADT (270 aa)) constitute a CoA carboxyltransferase N-terminal domain. Zn(2+)-binding residues include cysteine 29, cysteine 32, cysteine 48, and cysteine 51. A C4-type zinc finger spans residues 29 to 51 (CDSCGQVLYRAELERNLEVCPKC).

It belongs to the AccD/PCCB family. Acetyl-CoA carboxylase is a heterohexamer composed of biotin carboxyl carrier protein (AccB), biotin carboxylase (AccC) and two subunits each of ACCase subunit alpha (AccA) and ACCase subunit beta (AccD). Zn(2+) serves as cofactor.

Its subcellular location is the cytoplasm. The catalysed reaction is N(6)-carboxybiotinyl-L-lysyl-[protein] + acetyl-CoA = N(6)-biotinyl-L-lysyl-[protein] + malonyl-CoA. It participates in lipid metabolism; malonyl-CoA biosynthesis; malonyl-CoA from acetyl-CoA: step 1/1. Component of the acetyl coenzyme A carboxylase (ACC) complex. Biotin carboxylase (BC) catalyzes the carboxylation of biotin on its carrier protein (BCCP) and then the CO(2) group is transferred by the transcarboxylase to acetyl-CoA to form malonyl-CoA. This Yersinia pseudotuberculosis serotype O:1b (strain IP 31758) protein is Acetyl-coenzyme A carboxylase carboxyl transferase subunit beta.